The sequence spans 114 residues: Nucleoid-associated protein SGR_3378 (114 aa).

The protein belongs to the YbaB/EbfC family. As to quaternary structure, homodimer.

The protein resides in the cytoplasm. Its subcellular location is the nucleoid. Binds to DNA and alters its conformation. May be involved in regulation of gene expression, nucleoid organization and DNA protection. The chain is Nucleoid-associated protein SGR_3378 from Streptomyces griseus subsp. griseus (strain JCM 4626 / CBS 651.72 / NBRC 13350 / KCC S-0626 / ISP 5235).